Here is a 445-residue protein sequence, read N- to C-terminus: ATP-dependent rRNA helicase rrp3 (445 aa).

A compositionally biased stretch (basic and acidic residues) spans 1 to 10 (MSKNSSRDSS). The tract at residues 1-28 (MSKNSSRDSSPEEVSPDTETPSTTTAPK) is disordered. Low complexity predominate over residues 17 to 28 (DTETPSTTTAPK). The Q motif signature appears at 28–56 (KTFRELGVIDSLCEACEELGYTAPTPIQE). The region spanning 59 to 229 (IPIALEGRDL…RASLSDPVRV (171 aa)) is the Helicase ATP-binding domain. 72 to 79 (AETGSGKT) contacts ATP. Positions 178–181 (DEAD) match the DEAD box motif. Residues 240–400 (KLLQSYLFIP…EYKPEKDEVM (161 aa)) form the Helicase C-terminal domain. Positions 415–445 (LTMRDMQDKDNKGRGPRNRKRTRDDLDQDDG) are disordered.

Belongs to the DEAD box helicase family. DDX47/RRP3 subfamily. As to quaternary structure, interacts with the SSU processome.

The protein localises to the nucleus. It carries out the reaction ATP + H2O = ADP + phosphate + H(+). Functionally, ATP-dependent rRNA helicase required for pre-ribosomal RNA processing. Involved in the maturation of the 35S-pre-rRNA and to its cleavage to mature 18S rRNA. This Aspergillus terreus (strain NIH 2624 / FGSC A1156) protein is ATP-dependent rRNA helicase rrp3.